A 115-amino-acid chain; its full sequence is Putative membrane protein insertion efficiency factor (115 aa).

It belongs to the UPF0161 family.

It localises to the cell membrane. Its function is as follows. Could be involved in insertion of integral membrane proteins into the membrane. This Mycolicibacterium paratuberculosis (strain ATCC BAA-968 / K-10) (Mycobacterium paratuberculosis) protein is Putative membrane protein insertion efficiency factor.